The primary structure comprises 848 residues: Neprilysin-11 (848 aa).

The Cytoplasmic portion of the chain corresponds to 1 to 74; sequence MPFGNDPPDY…WWKSRTTMEK (74 aa). The helical; Signal-anchor for type II membrane protein transmembrane segment at 75-95 threads the bilayer; it reads LLLPVLLLFCLLTAVLLAVII. At 96-848 the chain is on the extracellular side; the sequence is NTDKRIEAMK…VNPDHKCIVW (753 aa). Positions 108–161 are disordered; the sequence is HATQTEHAGFGDPTENPTKTAEDPRVPPIVPEAPTSPEPEVTTSTEKPKEPEVC. Residues 133–144 are compositionally biased toward pro residues; the sequence is VPPIVPEAPTSP. The region spanning 160-848 is the Peptidase M13 domain; the sequence is VCSTPGCVRA…VNPDHKCIVW (689 aa). The cysteines at positions 161 and 166 are disulfide-linked. 8 N-linked (GlcNAc...) asparagine glycosylation sites follow: Asn-178, Asn-249, Asn-284, Asn-312, Asn-337, Asn-364, Asn-398, and Asn-438. Intrachain disulfides connect Cys-184–Cys-833, Cys-192–Cys-793, Cys-247–Cys-509, and Cys-719–Cys-845. His-682 contacts Zn(2+). Residue Glu-683 is part of the active site. His-686 provides a ligand contact to Zn(2+). Asn-726 carries an N-linked (GlcNAc...) asparagine glycan. Zn(2+) is bound at residue Glu-744. Asp-748 (proton donor) is an active-site residue.

Belongs to the peptidase M13 family. The cofactor is Zn(2+).

It is found in the cell membrane. Its function is as follows. Probable cell surface protease. This chain is Neprilysin-11 (nep-11), found in Caenorhabditis elegans.